Reading from the N-terminus, the 453-residue chain is Maltotriose-binding protein (453 aa).

The signal sequence occupies residues 1-29; it reads MKRGIYAVLLVGVLIFSVVASGCIGGTQT. Residues 27 to 65 show a composition bias toward low complexity; that stretch reads TQTQTETQTPEKTQTPTTTQPSPTTTTSPTQTTSQTPTE. The interval 27–73 is disordered; the sequence is TQTQTETQTPEKTQTPTTTQPSPTTTTSPTQTTSQTPTETETHTQEA.

This sequence belongs to the bacterial solute-binding protein 1 family.

Its function is as follows. Involved in an abc transport system for maltotriose. In Pyrococcus abyssi (strain GE5 / Orsay), this protein is Maltotriose-binding protein (malE).